The primary structure comprises 284 residues: TM2 domain-containing protein almondex (284 aa).

Positions 1–32 (MRLQRQCIVVNMRSAIVLIMIFVLTGIRNSET) are cleaved as a signal peptide. The segment at 33 to 63 (ASGGNQMDLSDSKGDHKDNSNASNGNGNAND) is disordered. At 33–225 (ASGGNQMDLS…NWTQGYRWST (193 aa)) the chain is on the extracellular side. Basic and acidic residues predominate over residues 42–51 (SDSKGDHKDN). Positions 52–63 (SNASNGNGNAND) are enriched in low complexity. N-linked (GlcNAc...) asparagine glycans are attached at residues asparagine 53, asparagine 89, asparagine 141, asparagine 194, asparagine 206, and asparagine 216. Residues 220 to 267 (GYRWSTALLISLTLGGFGADRFYLGHWQEGIGKLFSFGGLGVWTIIDV) form the TM2 domain. The helical transmembrane segment at 226-246 (ALLISLTLGGFGADRFYLGHW) threads the bilayer. Residues 247-249 (QEG) lie on the Cytoplasmic side of the membrane. A helical membrane pass occupies residues 250 to 270 (IGKLFSFGGLGVWTIIDVLLI). At 271–284 (SMHYLGPADGSLYI) the chain is on the extracellular side.

It belongs to the TM2 family. As to expression, expressed in female ovary, mainly in nurse cells (at protein level). Expressed in the brain at low levels (at protein level).

It is found in the membrane. Its subcellular location is the vesicle. Its function is as follows. Positive regulator of Notch signaling during lateral inhibition and boundary formation. Interacts with Notch signaling at the membrane, at the level of gamma-secretase-mediated S3 cleavage. May regulate Notch signaling by regulating the subcellular localization of N/Notch in a context dependent manner. Maternal neurogenic factor involved in Notch signaling-dependent mesectodermal and neuroectodermal specification during early embryogenesis. Functions cooperatively with bisc/TM2D1 and amrt/TM2D2. Required for maintenance of neuronal function. Involved in imaginal specification of eyes and wings. The polypeptide is TM2 domain-containing protein almondex (Drosophila melanogaster (Fruit fly)).